The following is a 392-amino-acid chain: uncharacterized protein (392 aa).

Helical transmembrane passes span 2-23 (WLAN…SLYI), 38-60 (SGYV…GRFG), 73-95 (GTGI…LFFL), 153-175 (FTYT…LFGV), 195-217 (VLSY…LIQT), 237-259 (VNLA…LLAR), 272-291 (RILI…QALA), 297-319 (LLVF…TAAI), 331-353 (VLGY…GGII), and 357-379 (FTIS…MLWI).

The protein belongs to the major facilitator superfamily.

Its subcellular location is the cell membrane. This is an uncharacterized protein from Bacillus subtilis (strain 168).